The chain runs to 187 residues: Biphenyl 2,3-dioxygenase subunit beta (187 aa).

It belongs to the bacterial ring-hydroxylating dioxygenase beta subunit family. In terms of assembly, heterohexamer consisting of three BphA1 subunits and three BphA2 subunits. The multicomponent biphenyl dioxygenase system is composed of a ferredoxin reductase (BphA4), a ferredoxin (BphA3), and a terminal oxygenase (BphA1A2).

The catalysed reaction is biphenyl + NADH + O2 + H(+) = (2R,3S)-3-phenylcyclohexa-3,5-diene-1,2-diol + NAD(+). It functions in the pathway xenobiotic degradation; biphenyl degradation; 2-hydroxy-2,4-pentadienoate and benzoate from biphenyl: step 1/4. Part of the oxygenase component of the biphenyl dioxygenase system that catalyzes the stereospecific dihydroxylation of the aromatic ring of biphenyl, yielding a dihydrodiol compound. Is likely involved in biphenyl degradation that allows growth of Rhodococcus sp. strain RHA1 on biphenyl as the sole source of carbon and energy. Can also use naphtalene and 4-chlorobiphenyl (4-CB) as substrates, as well as some polychlorinated biphenyls (PCB) such as 2,2'-dichlorobiphenyl, 2,3-dichlorobiphenyl and 2,5,2'-trichlorobiphenyl. Exhibits weak activity toward dibenzofuran and dibenzo-p-dioxin. Electrons are transferred from NADH to the [2Fe-2S] cluster in BphA1 via FAD of BphA4 and [2Fe-2S] cluster of BphA3. This Rhodococcus jostii (strain RHA1) protein is Biphenyl 2,3-dioxygenase subunit beta.